Consider the following 71-residue polypeptide: MPSVKIKENEPFDVALRRFKRSCEKAGILSEVRRREFYEKPTSERKRKLAAAVKRHAKKVQREQRRFERLY.

This sequence belongs to the bacterial ribosomal protein bS21 family.

The protein is Small ribosomal subunit protein bS21 of Hahella chejuensis (strain KCTC 2396).